Consider the following 294-residue polypeptide: MDINIDDILAELDKETTAVDSTKITQGSSSTTHRDANTIVGSSLDLNDKTQIYVSPQQDFSDLMKSWKNERCSPELLPYPHQLMKRLLNRISMQSQLIENISMGFLDMQNASNANPPMPNESKLPLLCMETELERLKFVIRSYIRCRLSKIDKFSLYLRQLNEDENSLISLTDLLSKDEIKYHDTHSLIWLKLVNDSILKYMPEELQAINDTEGSVNMIDEPDWNKFVFIHVNGPPDGKWNEDPLLQENEFGKPCYTVTIPDLKEEVELTIGSIYVMRYEVIRDLLRDDKVALI.

This sequence belongs to the GINS4/SLD5 family. Component of the GINS complex which is a heterotetramer composed of SLD5, PSF1, PSF2 and PSF3. Interacts with PSF2.

It is found in the nucleus. Required for DNA replication. Functions as part of the GINS complex which plays an essential role in the initiation of DNA replication by binding to DNA replication origins and facilitating the assembly of the DNA replication machinery. The chain is DNA replication complex GINS protein SLD5 from Saccharomyces cerevisiae (strain ATCC 204508 / S288c) (Baker's yeast).